The chain runs to 123 residues: Large ribosomal subunit protein bL12 (123 aa).

This sequence belongs to the bacterial ribosomal protein bL12 family. In terms of assembly, homodimer. Part of the ribosomal stalk of the 50S ribosomal subunit. Forms a multimeric L10(L12)X complex, where L10 forms an elongated spine to which 2 to 4 L12 dimers bind in a sequential fashion. Binds GTP-bound translation factors.

In terms of biological role, forms part of the ribosomal stalk which helps the ribosome interact with GTP-bound translation factors. Is thus essential for accurate translation. The protein is Large ribosomal subunit protein bL12 of Rhodopseudomonas palustris (strain BisA53).